We begin with the raw amino-acid sequence, 320 residues long: Ferrochelatase (320 aa).

Positions 194 and 275 each coordinate Fe cation.

This sequence belongs to the ferrochelatase family.

Its subcellular location is the cytoplasm. The catalysed reaction is heme b + 2 H(+) = protoporphyrin IX + Fe(2+). It participates in porphyrin-containing compound metabolism; protoheme biosynthesis; protoheme from protoporphyrin-IX: step 1/1. Functionally, catalyzes the ferrous insertion into protoporphyrin IX. In Enterobacter sp. (strain 638), this protein is Ferrochelatase.